The following is a 510-amino-acid chain: NAD(P)H-quinone oxidoreductase subunit 2 A, chloroplastic (510 aa).

A run of 13 helical transmembrane segments spans residues 24-44, 57-77, 99-119, 124-144, 149-169, 183-203, 229-249, 295-315, 323-343, 354-374, 395-415, 418-438, and 484-504; these read LLLFNGSFIFPECILIFGLIL, TPWLYFISSTSLVMSITALLF, IFQFLILLCSTLCIPLSVEYI, MAITEFLLFVLTATLGGMFLC, LITIFVAPECFSLCSYLLSGY, YLLMGGASSSILVYGFSWLYG, ISIALISITVGIGFKLSPAPF, WHLLLEILAILSMILGNLIAI, MLAYSSIGQIGYVIIGIIVGD, YMLFYISMNLGTFACIVLFGL, ALSSALCLLSLGGIPPLAGFF, LYLFWCGWQAGLYFLVSIGLL, and MIVCVIASTIPGISMNPIIAI.

Belongs to the complex I subunit 2 family. In terms of assembly, NDH is composed of at least 16 different subunits, 5 of which are encoded in the nucleus.

Its subcellular location is the plastid. The protein localises to the chloroplast thylakoid membrane. It carries out the reaction a plastoquinone + NADH + (n+1) H(+)(in) = a plastoquinol + NAD(+) + n H(+)(out). The enzyme catalyses a plastoquinone + NADPH + (n+1) H(+)(in) = a plastoquinol + NADP(+) + n H(+)(out). In terms of biological role, NDH shuttles electrons from NAD(P)H:plastoquinone, via FMN and iron-sulfur (Fe-S) centers, to quinones in the photosynthetic chain and possibly in a chloroplast respiratory chain. The immediate electron acceptor for the enzyme in this species is believed to be plastoquinone. Couples the redox reaction to proton translocation, and thus conserves the redox energy in a proton gradient. This Nuphar advena (Common spatterdock) protein is NAD(P)H-quinone oxidoreductase subunit 2 A, chloroplastic.